Here is a 554-residue protein sequence, read N- to C-terminus: (Z)-gamma-bisabolene synthase 2 (554 aa).

Mg(2+) is bound by residues Asp-306, Asp-310, Asp-450, and Asp-458. The DDXXD motif signature appears at 306–310 (DDACD).

It belongs to the terpene synthase family. Tpsa subfamily. Mg(2+) is required as a cofactor. Mn(2+) serves as cofactor. In terms of tissue distribution, predominantly expressed in roots. Expressed in the cortex and the sub-epidermal layers of roots. Also detected in leaf hydathodes and flower stigmata.

It is found in the cytoplasm. The enzyme catalyses (2E,6E)-farnesyl diphosphate = (Z)-gamma-bisabolene + diphosphate. It participates in secondary metabolite biosynthesis; terpenoid biosynthesis. In terms of biological role, involved in sesquiterpene (C15) biosynthesis. The major product is (Z)-gamma-bisabolene with minor amounts of (E)-nerolidol and alpha-bisabolol. This chain is (Z)-gamma-bisabolene synthase 2 (TPS13), found in Arabidopsis thaliana (Mouse-ear cress).